The primary structure comprises 606 residues: Probable potassium transport system protein Kup 2 (606 aa).

12 helical membrane passes run 18 to 38, 46 to 66, 97 to 117, 140 to 160, 169 to 189, 204 to 224, 247 to 267, 286 to 306, 339 to 359, 368 to 388, 395 to 415, and 418 to 438; these read GLVF…IMTL, VLGI…VEYA, VAFV…DGII, AQGV…IFQF, AFGP…IVSI, AVTF…EVIL, AWYF…AFIL, ILYI…SQAL, IYIG…MLIF, AYGL…TMIF, WKVP…TANF, and LPHG…IMII.

It belongs to the HAK/KUP transporter (TC 2.A.72) family.

It localises to the cell inner membrane. It catalyses the reaction K(+)(in) + H(+)(in) = K(+)(out) + H(+)(out). Transport of potassium into the cell. Likely operates as a K(+):H(+) symporter. In Geobacter metallireducens (strain ATCC 53774 / DSM 7210 / GS-15), this protein is Probable potassium transport system protein Kup 2.